A 189-amino-acid chain; its full sequence is GMP synthase [glutamine-hydrolyzing] subunit A (189 aa).

Positions 5–189 (KILVVNNYGQ…TNFFEVCDRY (185 aa)) constitute a Glutamine amidotransferase type-1 domain. Catalysis depends on Cys-79, which acts as the Nucleophile. Catalysis depends on residues His-166 and Glu-168.

In terms of assembly, heterodimer composed of a glutamine amidotransferase subunit (A) and a GMP-binding subunit (B).

The enzyme catalyses XMP + L-glutamine + ATP + H2O = GMP + L-glutamate + AMP + diphosphate + 2 H(+). It functions in the pathway purine metabolism; GMP biosynthesis; GMP from XMP (L-Gln route): step 1/1. In terms of biological role, catalyzes the synthesis of GMP from XMP. The chain is GMP synthase [glutamine-hydrolyzing] subunit A from Methanosarcina acetivorans (strain ATCC 35395 / DSM 2834 / JCM 12185 / C2A).